The primary structure comprises 448 residues: Probable glycine dehydrogenase (decarboxylating) subunit 1 (448 aa).

It belongs to the GcvP family. N-terminal subunit subfamily. In terms of assembly, the glycine cleavage system is composed of four proteins: P, T, L and H. In this organism, the P 'protein' is a heterodimer of two subunits.

It catalyses the reaction N(6)-[(R)-lipoyl]-L-lysyl-[glycine-cleavage complex H protein] + glycine + H(+) = N(6)-[(R)-S(8)-aminomethyldihydrolipoyl]-L-lysyl-[glycine-cleavage complex H protein] + CO2. The glycine cleavage system catalyzes the degradation of glycine. The P protein binds the alpha-amino group of glycine through its pyridoxal phosphate cofactor; CO(2) is released and the remaining methylamine moiety is then transferred to the lipoamide cofactor of the H protein. The chain is Probable glycine dehydrogenase (decarboxylating) subunit 1 from Bacillus pumilus (strain SAFR-032).